The sequence spans 356 residues: DNA polymerase IV (356 aa).

A UmuC domain is found at Ile6 to Gly187. Positions 10 and 105 each coordinate Mg(2+). The active site involves Glu106.

Belongs to the DNA polymerase type-Y family. Monomer. The cofactor is Mg(2+).

The protein resides in the cytoplasm. The enzyme catalyses DNA(n) + a 2'-deoxyribonucleoside 5'-triphosphate = DNA(n+1) + diphosphate. Its function is as follows. Poorly processive, error-prone DNA polymerase involved in untargeted mutagenesis. Copies undamaged DNA at stalled replication forks, which arise in vivo from mismatched or misaligned primer ends. These misaligned primers can be extended by PolIV. Exhibits no 3'-5' exonuclease (proofreading) activity. May be involved in translesional synthesis, in conjunction with the beta clamp from PolIII. The chain is DNA polymerase IV from Staphylococcus aureus (strain MRSA252).